The primary structure comprises 776 residues: Protein SEY1 (776 aa).

Residues 1 to 681 (MADRSAIQLI…KRSIITTRTH (681 aa)) are Cytoplasmic-facing. Positions 34–263 (GLDYHVISVF…TENYYFKPQY (230 aa)) constitute a GB1/RHD3-type G domain. 44–51 (GSQSSGKS) contributes to the GTP binding site. A helical transmembrane segment spans residues 682 to 702 (IPPWIYVLLAVLGWNEFVAVI). Residues 703-705 (RNP) are Lumenal-facing. A helical membrane pass occupies residues 706–726 (LFVTLTLILGATFFVIHKFGL). At 727-776 (WGPVVNVVQSAVGETRTAIKDKLRQFVVEDHEVKESFEMKDFSKNEQKEK) the chain is on the cytoplasmic side.

Belongs to the TRAFAC class dynamin-like GTPase superfamily. GB1/RHD3 GTPase family. RHD3 subfamily. As to quaternary structure, interacts with RTN1 and YOP1; GTP binding is not required for these interactions.

The protein localises to the endoplasmic reticulum membrane. Cooperates with the reticulon proteins RTN1 and RTN2 and the tubule-shaping DP1 family protein YOP1 to generate and maintain the structure of the tubular endoplasmic reticulum network. Has GTPase activity, which is required for its function in ER organization. This Saccharomyces cerevisiae (strain YJM789) (Baker's yeast) protein is Protein SEY1.